Consider the following 55-residue polypeptide: UPF0391 membrane protein Neut_2351/Neut_2360 (55 aa).

2 helical membrane-spanning segments follow: residues 4–24 and 28–48; these read LAVVFLIIAVIAALLGVTGVA and AEMAWILFVIGIVLAIVFWVL.

The protein belongs to the UPF0391 family.

Its subcellular location is the cell membrane. The protein is UPF0391 membrane protein Neut_2351/Neut_2360 of Nitrosomonas eutropha (strain DSM 101675 / C91 / Nm57).